Reading from the N-terminus, the 331-residue chain is L-lactate dehydrogenase A chain (331 aa).

NAD(+) contacts are provided by residues 29–57 (GMVG…MEDK) and Arg98. Residues Arg105, Asn137, and Arg168 each coordinate substrate. An NAD(+)-binding site is contributed by Asn137. The active-site Proton acceptor is the His192. Thr247 contacts substrate.

The protein belongs to the LDH/MDH superfamily. LDH family. As to quaternary structure, homotetramer.

The protein resides in the cytoplasm. It carries out the reaction (S)-lactate + NAD(+) = pyruvate + NADH + H(+). The protein operates within fermentation; pyruvate fermentation to lactate; (S)-lactate from pyruvate: step 1/1. Interconverts simultaneously and stereospecifically pyruvate and lactate with concomitant interconversion of NADH and NAD(+). The protein is L-lactate dehydrogenase A chain (ldha) of Champsocephalus gunnari (Mackerel icefish).